Here is a 96-residue protein sequence, read N- to C-terminus: Aspartyl/glutamyl-tRNA(Asn/Gln) amidotransferase subunit C (96 aa).

It belongs to the GatC family. In terms of assembly, heterotrimer of A, B and C subunits.

The catalysed reaction is L-glutamyl-tRNA(Gln) + L-glutamine + ATP + H2O = L-glutaminyl-tRNA(Gln) + L-glutamate + ADP + phosphate + H(+). The enzyme catalyses L-aspartyl-tRNA(Asn) + L-glutamine + ATP + H2O = L-asparaginyl-tRNA(Asn) + L-glutamate + ADP + phosphate + 2 H(+). Its function is as follows. Allows the formation of correctly charged Asn-tRNA(Asn) or Gln-tRNA(Gln) through the transamidation of misacylated Asp-tRNA(Asn) or Glu-tRNA(Gln) in organisms which lack either or both of asparaginyl-tRNA or glutaminyl-tRNA synthetases. The reaction takes place in the presence of glutamine and ATP through an activated phospho-Asp-tRNA(Asn) or phospho-Glu-tRNA(Gln). In Symbiobacterium thermophilum (strain DSM 24528 / JCM 14929 / IAM 14863 / T), this protein is Aspartyl/glutamyl-tRNA(Asn/Gln) amidotransferase subunit C.